A 500-amino-acid chain; its full sequence is MAIKANEISSLIKKQIENFTPDFEVAETGVVTYVGDGIARAYGLENAMSGELVEFSNGVLGMAQNLDATDVGIIVLGDFLSIREGDTVKRTGKIMEIQVGEELIGRVVNPLGQPVDGLGELNTGKTRPVEAKAPGVMQRKSVSEPLQTGLKAIDALVPIGRGQRELIIGDRQTGKTSVAIDAILNQKGQDMICIYVAIGQKESTVRTQVETLRKLDAMDYTIVVTASASQPSPLLYIAPYAGAAMGEEFMYNGKHVLVVYDDLSKQAVAYRELSLLLRRPPGREAYPGDVFYLHSRLLERAAKLSDDLGGGSMTALPFIETQAGDISAYIATNVISITDGQIFLENDLFYSGVRPAIDAGSSVSRVGGAAQIKAMKKVAGTLRLDLASFRELEAFTQFGSDLDEATQAKLNRGRRTVEVLKQPLHKPLAVEKQVLILYALTHGHLDDVPVDDVLDFETKMFDFFDANYADLLNVITDTKDLPEEAKLDEAIKAFKNTTNY.

Position 169 to 176 (169 to 176 (GDRQTGKT)) interacts with ATP.

It belongs to the ATPase alpha/beta chains family. F-type ATPases have 2 components, CF(1) - the catalytic core - and CF(0) - the membrane proton channel. CF(1) has five subunits: alpha(3), beta(3), gamma(1), delta(1), epsilon(1). CF(0) has three main subunits: a(1), b(2) and c(9-12). The alpha and beta chains form an alternating ring which encloses part of the gamma chain. CF(1) is attached to CF(0) by a central stalk formed by the gamma and epsilon chains, while a peripheral stalk is formed by the delta and b chains.

Its subcellular location is the cell membrane. The catalysed reaction is ATP + H2O + 4 H(+)(in) = ADP + phosphate + 5 H(+)(out). Produces ATP from ADP in the presence of a proton gradient across the membrane. The alpha chain is a regulatory subunit. The chain is ATP synthase subunit alpha from Lactococcus lactis subsp. cremoris (strain SK11).